Here is a 1026-residue protein sequence, read N- to C-terminus: P3N-PIPO polyprotein (1026 aa).

A Peptidase S30 domain is found at 165 to 308 (RMSEASLQLF…KEQSNEIVHY (144 aa)). Active-site for P1 proteinase activity residues include H216, D225, and S259. The Involved in interaction with stylet and aphid transmission signature appears at 360–363 (KITC). The Involved in virions binding and aphid transmission motif lies at 618-620 (PTK). The Peptidase C6 domain maps to 644-766 (MFIAKAGYCY…DSSMKTYLVG (123 aa)). Residues C652 and H725 each act as for helper component proteinase activity in the active site.

Belongs to the potyviridae P3N-PIPO polyprotein family. Interacts (via PIPO domain) with host PCaP1 protein; this interaction may help to anchor the movement complex to the plasma membrane from which the complex could move to the plasmodesmata. Post-translationally, potyviral RNA is expressed as two polyproteins which undergo post-translational proteolytic processing. Genome polyprotein is processed by NIa-pro, P1 and HC-pro proteinases resulting in the production of at least ten individual proteins. P3N-PIPO is cleaved by P1 and HC-pro proteinases resulting in the production of three individual proteins. The P1 proteinase and the HC-pro cleave only their respective C-termini autocatalytically.

The protein localises to the host cell junction. Its subcellular location is the host plasmodesma. The catalysed reaction is Hydrolyzes a Gly-|-Gly bond at its own C-terminus, commonly in the sequence -Tyr-Xaa-Val-Gly-|-Gly, in the processing of the potyviral polyprotein.. Its function is as follows. Required for aphid transmission and also has proteolytic activity. Only cleaves a Gly-Gly dipeptide at its own C-terminus. Interacts with virions and aphid stylets. Acts as a suppressor of RNA-mediated gene silencing, also known as post-transcriptional gene silencing (PTGS), a mechanism of plant viral defense that limits the accumulation of viral RNAs. May have RNA-binding activity. Functionally, allows efficient cell to cell propagation, by bypassing the host cell wall barrier. Transports viral genome to neighboring plant cells directly through plasmosdesmata, without any budding. In Prunus armeniaca (Apricot), this protein is P3N-PIPO polyprotein.